Consider the following 368-residue polypeptide: Chaperone protein DnaJ (368 aa).

Positions 5–70 (DYYEVLGVSK…EKRSMYDRMG (66 aa)) constitute a J domain. The CR-type zinc-finger motif lies at 132 to 210 (GVKKTITFTA…CHGSGVADRQ (79 aa)). Residues C145, C148, C162, C165, C184, C187, C198, and C201 each coordinate Zn(2+). 4 CXXCXGXG motif repeats span residues 145-152 (CEVCDGKG), 162-169 (CRTCHGTG), 184-191 (CGTCRGQG), and 198-205 (CQSCHGSG). Positions 349–368 (DGDEHSSSPKKKSFFDRLFD) are disordered. The segment covering 350–368 (GDEHSSSPKKKSFFDRLFD) has biased composition (basic and acidic residues).

The protein belongs to the DnaJ family. As to quaternary structure, homodimer. Zn(2+) is required as a cofactor.

The protein resides in the cytoplasm. Participates actively in the response to hyperosmotic and heat shock by preventing the aggregation of stress-denatured proteins and by disaggregating proteins, also in an autonomous, DnaK-independent fashion. Unfolded proteins bind initially to DnaJ; upon interaction with the DnaJ-bound protein, DnaK hydrolyzes its bound ATP, resulting in the formation of a stable complex. GrpE releases ADP from DnaK; ATP binding to DnaK triggers the release of the substrate protein, thus completing the reaction cycle. Several rounds of ATP-dependent interactions between DnaJ, DnaK and GrpE are required for fully efficient folding. Also involved, together with DnaK and GrpE, in the DNA replication of plasmids through activation of initiation proteins. The protein is Chaperone protein DnaJ of Acinetobacter baylyi (strain ATCC 33305 / BD413 / ADP1).